The chain runs to 1009 residues: MADRLIVRGAREHNLKNVSLDLPRDSLIVFTGLSGSGKSSLAFDTIFAEGQRRYVESLSSYARQFLGQMDKPDVDFIEGLSPAVSIDQKSTSRNPRSTVGTITEVYDYLRLLFARIGKPHCPECGRPISRQSPQAIVDKVLELPEGSRFQVLSPLVRERKGEFVDLFADLQTKGYSRARVDGQTIQLSDPPTLKKQEKHTIEVVIDRLTVKEGAKRRLTDSVETALGLAGGMVVLDFVDLPEDDPERERMYSEHLYCPYDDLSFEELEPRSFSFNSPFGACPDCSGIGTRMEVDAELIVPDEEKSLDEGAIHPWSHGHTKDYFGRLIGALADALGFRTDIPFAGLPQRAKKALLYGHKTQIEVRYRNRYGRERVYTTPFEGAVPFVKRRHSEAESDASRERFEGYMREVPCPTCQGTRLKPLVLAVTVMEKSIAEVAAMSISDCADFLGKLKLNARDKKIAERVLKEVNERLRFLVDVGLDYLSLNRAAGTLSGGEAQRIRLATQIGSGLVGVLYVLDEPSIGLHQRDNHRLIETLVRLRDMGNTLIVVEHDEDTIKVADWIVDIGPGAGEHGGKVVHSGSLKELLANAESQTGQYLSGKKSIPLPDIRRPRDPSRQLTVHGARENNLQDIDVSFPLGVLTAVTGVSGSGKSTLVNDILYTHLARELNGARSVPGRHTRVDGDDLVDKVVHVDQSPIGRTPRSNPATYTGVFDHVRKLFAETTEAKVRGYLPGRFSFNVKGGRCENCSGDGTIKIEMNFLPDVYVPCEVCHGARYNRETLEVHYKGKSIADVLNMPIEEAMHFFEAVPAIARHLNTLNDVGLGYVRLGQSATTLSGGEAQRVKLASELQRRSTGRTVYVLDEPTTGLHFEDISKLLVVLSGLVDKGNTVIVIEHNLDVIKTADWVVDMGPEGGAGGGLVVAEGTPEEVAGVPTSHTGKFLREILDADRISDAASVKAPRKTAARKTAAAKSTTKKTATVRTTNNTATKKAAAVTKKTAPAKKTTRARKA.

Residue 32-39 coordinates ATP; it reads GLSGSGKS. ABC transporter domains lie at 314 to 592 and 612 to 941; these read WSHG…AESQ and RDPS…KFLR. ATP is bound at residue 645–652; the sequence is GVSGSGKS. The C4-type zinc-finger motif lies at 744–770; the sequence is CENCSGDGTIKIEMNFLPDVYVPCEVC. The tract at residues 956 to 1009 is disordered; the sequence is KAPRKTAARKTAAAKSTTKKTATVRTTNNTATKKAAAVTKKTAPAKKTTRARKA. Residues 964 to 997 are compositionally biased toward low complexity; it reads RKTAAAKSTTKKTATVRTTNNTATKKAAAVTKKT. Over residues 998–1009 the composition is skewed to basic residues; the sequence is APAKKTTRARKA.

Belongs to the ABC transporter superfamily. UvrA family. In terms of assembly, forms a heterotetramer with UvrB during the search for lesions.

Its subcellular location is the cytoplasm. Its function is as follows. The UvrABC repair system catalyzes the recognition and processing of DNA lesions. UvrA is an ATPase and a DNA-binding protein. A damage recognition complex composed of 2 UvrA and 2 UvrB subunits scans DNA for abnormalities. When the presence of a lesion has been verified by UvrB, the UvrA molecules dissociate. In Streptomyces avermitilis (strain ATCC 31267 / DSM 46492 / JCM 5070 / NBRC 14893 / NCIMB 12804 / NRRL 8165 / MA-4680), this protein is UvrABC system protein A.